Here is a 202-residue protein sequence, read N- to C-terminus: Protein Mbar_A1807 (202 aa).

One can recognise an AMMECR1 domain in the interval 5–196 (VEGRAAVKLA…EKEPCGEVLE (192 aa)).

This chain is Protein Mbar_A1807, found in Methanosarcina barkeri (strain Fusaro / DSM 804).